An 88-amino-acid chain; its full sequence is Putative transmembrane protein ORF24 (88 aa).

3 helical membrane-spanning segments follow: residues 16–36 (LNMGLALLLATIMVMILWAGM), 42–62 (AVFVIWALTSITLIFTFVTQF), and 64–84 (FIWFWVMVMLSLLLISIVASI).

The protein localises to the host membrane. This chain is Putative transmembrane protein ORF24, found in Haloarcula hispanica (His1V).